A 376-amino-acid chain; its full sequence is Erythronate-4-phosphate dehydrogenase (376 aa).

The substrate site is built by serine 45 and threonine 67. NAD(+)-binding positions include 127-128 (QV), aspartate 147, and threonine 176. Arginine 209 is a catalytic residue. Residue aspartate 233 coordinates NAD(+). Residue glutamate 238 is part of the active site. Residue histidine 255 is the Proton donor of the active site. Glycine 258 serves as a coordination point for NAD(+). Tyrosine 259 contributes to the substrate binding site.

It belongs to the D-isomer specific 2-hydroxyacid dehydrogenase family. PdxB subfamily. In terms of assembly, homodimer.

Its subcellular location is the cytoplasm. The enzyme catalyses 4-phospho-D-erythronate + NAD(+) = (R)-3-hydroxy-2-oxo-4-phosphooxybutanoate + NADH + H(+). Its pathway is cofactor biosynthesis; pyridoxine 5'-phosphate biosynthesis; pyridoxine 5'-phosphate from D-erythrose 4-phosphate: step 2/5. In terms of biological role, catalyzes the oxidation of erythronate-4-phosphate to 3-hydroxy-2-oxo-4-phosphonooxybutanoate. The chain is Erythronate-4-phosphate dehydrogenase from Aliivibrio salmonicida (strain LFI1238) (Vibrio salmonicida (strain LFI1238)).